The primary structure comprises 306 residues: N-acetylmuramic acid 6-phosphate etherase (306 aa).

Residues 55–218 (IVPRMKKGGR…STGVMIKLGK (164 aa)) form the SIS domain. Glu83 functions as the Proton donor in the catalytic mechanism. Glu114 is an active-site residue.

Belongs to the GCKR-like family. MurNAc-6-P etherase subfamily. Homodimer.

The enzyme catalyses N-acetyl-D-muramate 6-phosphate + H2O = N-acetyl-D-glucosamine 6-phosphate + (R)-lactate. The protein operates within amino-sugar metabolism; N-acetylmuramate degradation. Its function is as follows. Specifically catalyzes the cleavage of the D-lactyl ether substituent of MurNAc 6-phosphate, producing GlcNAc 6-phosphate and D-lactate. This Caldanaerobacter subterraneus subsp. tengcongensis (strain DSM 15242 / JCM 11007 / NBRC 100824 / MB4) (Thermoanaerobacter tengcongensis) protein is N-acetylmuramic acid 6-phosphate etherase.